Reading from the N-terminus, the 189-residue chain is dTTP/UTP pyrophosphatase (189 aa).

Catalysis depends on Asp-70, which acts as the Proton acceptor. Cys-74 and Cys-79 are disulfide-bonded.

The protein belongs to the Maf family. YhdE subfamily. In terms of assembly, homodimer. A divalent metal cation serves as cofactor.

Its subcellular location is the cytoplasm. The catalysed reaction is dTTP + H2O = dTMP + diphosphate + H(+). It catalyses the reaction UTP + H2O = UMP + diphosphate + H(+). The enzyme catalyses CTP + H2O = CMP + diphosphate + H(+). It carries out the reaction psi-UTP + H2O = psi-UMP + diphosphate + H(+). The catalysed reaction is 5-methyl-CTP + H2O = 5-methyl-CMP + diphosphate + H(+). It catalyses the reaction 5-methyl-UTP + H2O = 5-methyl-UMP + diphosphate + H(+). Functionally, nucleoside triphosphate pyrophosphatase that hydrolyzes dTTP and UTP. Can also hydrolyze CTP and the modified nucleotides pseudo-UTP, 5-methyl-CTP (m(5)CTP) and 5-methyl-UTP (m(5)UTP). May have a dual role in cell division arrest and in preventing the incorporation of modified nucleotides into cellular nucleic acids. The polypeptide is dTTP/UTP pyrophosphatase (Bacillus subtilis (strain 168)).